A 990-amino-acid chain; its full sequence is Importin beta-like protein kap111 (990 aa).

Belongs to the importin beta family.

The protein resides in the nucleus. Its function is as follows. Functions as a component of the nuclear pore complex (NPC). NPC components, collectively referred to as nucleoporins (NUPs), can play the role of both NPC structural components and of docking or interaction partners for transiently associated nuclear transport factors. Active directional transport is assured by both, a Phe-Gly (FG) repeat affinity gradient for these transport factors across the NPC and a transport cofactor concentration gradient across the nuclear envelope. The sequence is that of Importin beta-like protein kap111 (kap111) from Schizosaccharomyces pombe (strain 972 / ATCC 24843) (Fission yeast).